We begin with the raw amino-acid sequence, 378 residues long: Anhydro-N-acetylmuramic acid kinase (378 aa).

9 to 16 (GTSADGID) serves as a coordination point for ATP.

It belongs to the anhydro-N-acetylmuramic acid kinase family.

The enzyme catalyses 1,6-anhydro-N-acetyl-beta-muramate + ATP + H2O = N-acetyl-D-muramate 6-phosphate + ADP + H(+). It participates in amino-sugar metabolism; 1,6-anhydro-N-acetylmuramate degradation. The protein operates within cell wall biogenesis; peptidoglycan recycling. Catalyzes the specific phosphorylation of 1,6-anhydro-N-acetylmuramic acid (anhMurNAc) with the simultaneous cleavage of the 1,6-anhydro ring, generating MurNAc-6-P. Is required for the utilization of anhMurNAc either imported from the medium or derived from its own cell wall murein, and thus plays a role in cell wall recycling. The protein is Anhydro-N-acetylmuramic acid kinase of Synechococcus elongatus (strain ATCC 33912 / PCC 7942 / FACHB-805) (Anacystis nidulans R2).